We begin with the raw amino-acid sequence, 860 residues long: Leucine--tRNA ligase (860 aa).

The 'HIGH' region signature appears at 42–52 (PYPSGRLHMGH). The 'KMSKS' region signature appears at 619–623 (KMSKS). ATP is bound at residue lysine 622.

The protein belongs to the class-I aminoacyl-tRNA synthetase family.

Its subcellular location is the cytoplasm. It catalyses the reaction tRNA(Leu) + L-leucine + ATP = L-leucyl-tRNA(Leu) + AMP + diphosphate. The protein is Leucine--tRNA ligase of Escherichia coli (strain K12 / MC4100 / BW2952).